The chain runs to 84 residues: Alpha-like toxin BmK M1 (84 aa).

The signal sequence occupies residues 1–19 (MNYLVMISFALLLMTGVES). Residues 21–83 (RDAYIAKPHN…VPIRVPGKCH (63 aa)) enclose the LCN-type CS-alpha/beta domain. 4 disulfides stabilise this stretch: Cys31-Cys82, Cys35-Cys55, Cys41-Cys65, and Cys45-Cys67. Residue Arg84 is a propeptide, removed by a carboxypeptidase.

The protein belongs to the long (4 C-C) scorpion toxin superfamily. Sodium channel inhibitor family. Alpha subfamily. In terms of tissue distribution, expressed by the venom gland.

Its subcellular location is the secreted. Alpha toxins bind voltage-independently at site-3 of sodium channels (Nav) and inhibit the inactivation of the activated channels thereby blocking neuronal transmission. This toxin is active against both mammals and insects, and is classified as an alpha-like toxin. It is active on Nav1.2/SCN2A (EC(50)=139-252 nM), Nav1.3/SCN3A (EC(50)=565 nM), Nav1.4/SCN4A and Nav1.5/SCN5A (EC(50)=195-500 nM), Nav1.6/SCN8A (EC(50)=214 nM), and drosophila DmNav1 (EC(50)=30 nM). In mNav1.6/SCN8A, the toxin induces a large increase in both transient and persistent currents, which correlates with a prominent reduction in the fast component of inactivating current. In rNav1.2/SCN2A and rNav1.3/SCN3A, toxin-increased currents is much smaller. Moreover, the toxin only accelerates the slow inactivation development and delay recovery of mNav1.6/SCN8A through binding to the channel in the open state. Is 6-fold more toxic than BmK-M2. In vivo, intrahippocampal injection into rat induces epileptiform responses. In addition, intraplantar injection into rat induces spontaneous nociception and hyperalgesia. The sequence is that of Alpha-like toxin BmK M1 from Olivierus martensii (Manchurian scorpion).